We begin with the raw amino-acid sequence, 145 residues long: Transcription antitermination protein NusB (145 aa).

Belongs to the NusB family.

Functionally, involved in transcription antitermination. Required for transcription of ribosomal RNA (rRNA) genes. Binds specifically to the boxA antiterminator sequence of the ribosomal RNA (rrn) operons. This chain is Transcription antitermination protein NusB, found in Burkholderia vietnamiensis (strain G4 / LMG 22486) (Burkholderia cepacia (strain R1808)).